A 900-amino-acid chain; its full sequence is Serine-rich coiled-coil domain-containing protein 1 (900 aa).

2 disordered regions span residues 1-100 (MGDS…HSNM) and 156-178 (KSEGDDSGFTEDQTRRSVKQSTR). The segment covering 29-56 (LPSSPSSSNTVGVHSSSPSSTNSSSGST) has biased composition (low complexity). Positions 81 to 100 (EPTNQNLSISNGAQPGHSNM) are enriched in polar residues. The stretch at 673-707 (MKDECSMLKLQLKEKDELISQLQEELGKVRHLQKA) forms a coiled coil.

This sequence belongs to the CCSER family.

This is Serine-rich coiled-coil domain-containing protein 1 (CCSER1) from Homo sapiens (Human).